A 473-amino-acid polypeptide reads, in one-letter code: Maltose fermentation regulatory protein MAL13 (473 aa).

A DNA-binding region (zn(2)-C6 fungal-type) is located at residues 13 to 39 (CDCCRIRRVKCDGKRPCSSCLQNSLDC). The Nuclear localization signal signature appears at 46-54 (RKRGPKSIR).

Belongs to the MAL13 family.

It localises to the nucleus. Regulates the coordinate transcription of structural MAL1S (maltase) and AGT1 (maltose permease) genes. This Saccharomyces cerevisiae (strain ATCC 204508 / S288c) (Baker's yeast) protein is Maltose fermentation regulatory protein MAL13 (MAL13).